The following is a 477-amino-acid chain: Bifunctional protein HldE (477 aa).

A ribokinase region spans residues Met1–Thr319. ATP is bound at residue Asn195–Glu198. Asp264 is a catalytic residue. Positions Met346 to Asn477 are cytidylyltransferase.

The protein in the N-terminal section; belongs to the carbohydrate kinase PfkB family. In the C-terminal section; belongs to the cytidylyltransferase family. As to quaternary structure, homodimer.

The catalysed reaction is D-glycero-beta-D-manno-heptose 7-phosphate + ATP = D-glycero-beta-D-manno-heptose 1,7-bisphosphate + ADP + H(+). The enzyme catalyses D-glycero-beta-D-manno-heptose 1-phosphate + ATP + H(+) = ADP-D-glycero-beta-D-manno-heptose + diphosphate. Its pathway is nucleotide-sugar biosynthesis; ADP-L-glycero-beta-D-manno-heptose biosynthesis; ADP-L-glycero-beta-D-manno-heptose from D-glycero-beta-D-manno-heptose 7-phosphate: step 1/4. It functions in the pathway nucleotide-sugar biosynthesis; ADP-L-glycero-beta-D-manno-heptose biosynthesis; ADP-L-glycero-beta-D-manno-heptose from D-glycero-beta-D-manno-heptose 7-phosphate: step 3/4. Functionally, catalyzes the phosphorylation of D-glycero-D-manno-heptose 7-phosphate at the C-1 position to selectively form D-glycero-beta-D-manno-heptose-1,7-bisphosphate. In terms of biological role, catalyzes the ADP transfer from ATP to D-glycero-beta-D-manno-heptose 1-phosphate, yielding ADP-D-glycero-beta-D-manno-heptose. This Blochmanniella pennsylvanica (strain BPEN) protein is Bifunctional protein HldE.